Here is a 355-residue protein sequence, read N- to C-terminus: (3aS,4S,5R,7aS)-5-hydroxy-7a-methyl-1-oxo-octahydro-1H-indene-4-carboxyl-CoA dehydrogenase (355 aa).

FMN is bound by residues 21–23 (GMG), 173–175 (AGG), and 196–197 (GT).

Belongs to the nitronate monooxygenase family.

It catalyses the reaction (3aS,4S,5R,7aS)-5-hydroxy-7a-methyl-1-oxo-octahydro-1H-indene-4-carboxyl-CoA + NAD(+) = (5R,7aS)-5-hydroxy-7a-methyl-1-oxo-2,3,5,6,7,7a-hexahydro-1H-indene-carboxyl-CoA + NADH + H(+). Its pathway is steroid metabolism; cholesterol degradation. With respect to regulation, requires the presence of IpdF. In terms of biological role, involved in the final steps of cholesterol and steroid degradation. Probably catalyzes the introduction of a double bound into the C ring of 5OH-HIC-CoA, leading to the formation of (5R,7aS)-5-hydroxy-7a-methyl-1-oxo-3,5,6,7-tetrahydro-2H-indene-4-carboxyl-CoA. This chain is (3aS,4S,5R,7aS)-5-hydroxy-7a-methyl-1-oxo-octahydro-1H-indene-4-carboxyl-CoA dehydrogenase, found in Mycobacterium tuberculosis (strain ATCC 25618 / H37Rv).